Here is a 469-residue protein sequence, read N- to C-terminus: ATP synthase subunit beta (469 aa).

153 to 160 is an ATP binding site; the sequence is GGAGVGKT.

Belongs to the ATPase alpha/beta chains family. In terms of assembly, F-type ATPases have 2 components, CF(1) - the catalytic core - and CF(0) - the membrane proton channel. CF(1) has five subunits: alpha(3), beta(3), gamma(1), delta(1), epsilon(1). CF(0) has three main subunits: a(1), b(2) and c(9-12). The alpha and beta chains form an alternating ring which encloses part of the gamma chain. CF(1) is attached to CF(0) by a central stalk formed by the gamma and epsilon chains, while a peripheral stalk is formed by the delta and b chains.

Its subcellular location is the cell membrane. It catalyses the reaction ATP + H2O + 4 H(+)(in) = ADP + phosphate + 5 H(+)(out). In terms of biological role, produces ATP from ADP in the presence of a proton gradient across the membrane. The catalytic sites are hosted primarily by the beta subunits. The chain is ATP synthase subunit beta from Pediococcus pentosaceus (strain ATCC 25745 / CCUG 21536 / LMG 10740 / 183-1w).